The chain runs to 742 residues: 5-methyltetrahydropteroyltriglutamate--homocysteine methyltransferase (742 aa).

Residues 18–21 (REWK) and K112 each bind 5-methyltetrahydropteroyltri-L-glutamate. Residues 420-422 (IGS) and E473 contribute to the L-homocysteine site. L-methionine is bound by residues 420 to 422 (IGS) and E473. W550 is a binding site for 5-methyltetrahydropteroyltri-L-glutamate. L-homocysteine is bound at residue D588. D588 provides a ligand contact to L-methionine. E594 serves as a coordination point for 5-methyltetrahydropteroyltri-L-glutamate. Residues H630, C632, and E654 each contribute to the Zn(2+) site. Residue H683 is the Proton donor of the active site. C715 provides a ligand contact to Zn(2+).

This sequence belongs to the vitamin-B12 independent methionine synthase family. Requires Zn(2+) as cofactor.

It catalyses the reaction 5-methyltetrahydropteroyltri-L-glutamate + L-homocysteine = tetrahydropteroyltri-L-glutamate + L-methionine. It participates in amino-acid biosynthesis; L-methionine biosynthesis via de novo pathway; L-methionine from L-homocysteine (MetE route): step 1/1. Its function is as follows. Catalyzes the transfer of a methyl group from 5-methyltetrahydrofolate to homocysteine resulting in methionine formation. The chain is 5-methyltetrahydropteroyltriglutamate--homocysteine methyltransferase from Staphylococcus aureus (strain bovine RF122 / ET3-1).